The following is a 198-amino-acid chain: Ribonuclease 3-like protein 1 (198 aa).

The segment covering 85 to 110 (KKLAPKPDEEHTTTTKPISKDDESKT) has biased composition (basic and acidic residues). The interval 85 to 115 (KKLAPKPDEEHTTTTKPISKDDESKTRRGSA) is disordered. Residues 114-191 (SAKSVLHEMC…AEGALWYLEH (78 aa)) form the DRBM domain.

The chain is Ribonuclease 3-like protein 1 (RTL1) from Arabidopsis thaliana (Mouse-ear cress).